The chain runs to 1063 residues: Unconventional myosin-Ic (1063 aa).

An N-acetylmethionine modification is found at M1. T10 carries the post-translational modification Phosphoserine. Positions 47–731 (GVQDFVLLEN…TLFATEDSLE (685 aa)) constitute a Myosin motor domain. ATP contacts are provided by residues N88, Y96, 139 to 148 (SGESGAGKTE), and 192 to 196 (NDNSS). The residue at position 383 (K383) is an N6-methyllysine. Position 408 is a phosphoserine (S408). K486 bears the N6-acetyllysine mark. A Phosphoserine modification is found at S536. Positions 608–630 (LLQLVEILRSKEPAYIRCIKPND) are actin-binding. 2 consecutive IQ domains span residues 734 to 757 (RQSL…FLRV) and 758 to 786 (KRSA…AAQT). Phosphoserine occurs at positions 864 and 1041. The region spanning 885 to 1059 (KDNYPQSVPR…NGHLAVVAPR (175 aa)) is the TH1 domain.

Belongs to the TRAFAC class myosin-kinesin ATPase superfamily. Myosin family. In terms of assembly, interacts (via its IQ motifs) with CABP1 and CIB1; the interaction with CABP1 and CIB1 is calcium-dependent. Interacts (via tail domain) with PLEKHB1 (via PH domain); the interaction is not affected by the presence or absence of calcium and CALM. Interacts with POLR1A. Interacts with POLR2A. Component of the B-WICH complex, at least composed of SMARCA5/SNF2H, BAZ1B/WSTF, SF3B1, DEK, MYO1C, ERCC6, MYBBP1A and DDX21. Interacts (via its IQ motifs) with CALM; this precludes interaction with YWHAB. Interacts with YWHAB; this precludes interaction with CALM. Interacts with RPS6. Interacts with actin. Interacts with LLPH. Interacts with GLUT4. Interacts (via its IQ motifs) with SH3BGRL3; the interaction is dependent on calcium and takes place at membrane ruffles. Post-translationally, isoform 2 contains a N-acetylmethionine at position 1. In terms of tissue distribution, isoform 3 is expressed in small intestine, pancreas, brain, kidney, skin, heart muscle, testis, striated muscle, spleen, liver and lung (at protein level). Expressed in brain, testis, adrenal glands, thymus, spleen, kidney, lung, heart, cochlea and vestibule. Expressed in sensory hair cells of the inner ear. Expressed in adipocytes.

The protein localises to the cytoplasm. Its subcellular location is the nucleus. It localises to the cell cortex. The protein resides in the cell projection. It is found in the stereocilium membrane. The protein localises to the cytoplasmic vesicle. Its subcellular location is the ruffle membrane. It localises to the nucleolus. The protein resides in the nucleoplasm. In terms of biological role, myosins are actin-based motor molecules with ATPase activity. Unconventional myosins serve in intracellular movements. Their highly divergent tails bind to membranous compartments, which then are moved relative to actin filaments. Involved in glucose transporter recycling in response to insulin by regulating movement of intracellular GLUT4-containing vesicles to the plasma membrane. Component of the hair cell's (the sensory cells of the inner ear) adaptation-motor complex. Acts as a mediator of adaptation of mechanoelectrical transduction in stereocilia of vestibular hair cells. Binds phosphoinositides and links the actin cytoskeleton to cellular membranes. Its function is as follows. Involved in regulation of transcription. Associated with transcriptional active ribosomal genes. Appears to cooperate with the WICH chromatin-remodeling complex to facilitate transcription. Necessary for the formation of the first phosphodiester bond during transcription initiation. The sequence is that of Unconventional myosin-Ic (Myo1c) from Mus musculus (Mouse).